We begin with the raw amino-acid sequence, 800 residues long: Nuclear cap-binding protein subunit 1 (800 aa).

Positions 1 to 26 (MSRRRAHDTEDEGYDHRRNKRRRVSE) are disordered. Position 9 is a phosphothreonine (Thr9). The 213-residue stretch at 31 to 243 (EDRLESLILR…CLWAQIRKLR (213 aa)) folds into the MIF4G domain. Residues 669 to 700 (LAKADSSSSDSEDDSSHKRKKPITHADKPSEE) form a disordered region.

Belongs to the NCBP1 family. As to quaternary structure, component of the nuclear cap-binding complex (CBC), a heterodimer composed of Cbp80 and Cbp20 that interacts with m7GpppG-capped RNA.

The protein localises to the nucleus. Functionally, component of the cap-binding complex (CBC), which binds cotranscriptionally to the 5'-cap of pre-mRNAs and is involved in various processes such as pre-mRNA splicing and RNA-mediated gene silencing (RNAi). The CBC complex is involved in miRNA-mediated RNA interference via its interaction with Ars2 and is required for primary microRNAs (miRNAs) processing. Also involved in innate immunity via the short interfering RNAs (siRNAs) processing machinery by restricting the viral RNA production. In the CBC complex, Cbp80 does not bind directly capped RNAs (m7GpppG-capped RNA) but is required to stabilize the movement of the N-terminal loop of Cbp20 and lock the CBC into a high affinity cap-binding state with the cap structure. This Drosophila melanogaster (Fruit fly) protein is Nuclear cap-binding protein subunit 1 (Cbp80).